Here is a 392-residue protein sequence, read N- to C-terminus: ATP phosphoribosyltransferase regulatory subunit (392 aa).

Belongs to the class-II aminoacyl-tRNA synthetase family. HisZ subfamily. In terms of assembly, heteromultimer composed of HisG and HisZ subunits.

Its subcellular location is the cytoplasm. Its pathway is amino-acid biosynthesis; L-histidine biosynthesis; L-histidine from 5-phospho-alpha-D-ribose 1-diphosphate: step 1/9. Its function is as follows. Required for the first step of histidine biosynthesis. May allow the feedback regulation of ATP phosphoribosyltransferase activity by histidine. The sequence is that of ATP phosphoribosyltransferase regulatory subunit from Synechococcus sp. (strain WH7803).